A 192-amino-acid polypeptide reads, in one-letter code: Phosphoheptose isomerase (192 aa).

The region spanning 34-192 (VVDAYKAGNK…VERELFVKGK (159 aa)) is the SIS domain. 49–51 (NGG) is a binding site for substrate. Residues histidine 58 and glutamate 62 each coordinate Zn(2+). Residues glutamate 62, 91–92 (ND), 117–119 (STS), serine 122, and glutamine 169 each bind substrate. Zn(2+) is bound by residues glutamine 169 and histidine 177.

Belongs to the SIS family. GmhA subfamily. As to quaternary structure, homotetramer. It depends on Zn(2+) as a cofactor.

Its subcellular location is the cytoplasm. The catalysed reaction is 2 D-sedoheptulose 7-phosphate = D-glycero-alpha-D-manno-heptose 7-phosphate + D-glycero-beta-D-manno-heptose 7-phosphate. It participates in carbohydrate biosynthesis; D-glycero-D-manno-heptose 7-phosphate biosynthesis; D-glycero-alpha-D-manno-heptose 7-phosphate and D-glycero-beta-D-manno-heptose 7-phosphate from sedoheptulose 7-phosphate: step 1/1. Its function is as follows. Catalyzes the isomerization of sedoheptulose 7-phosphate in D-glycero-D-manno-heptose 7-phosphate. This is Phosphoheptose isomerase from Citrifermentans bemidjiense (strain ATCC BAA-1014 / DSM 16622 / JCM 12645 / Bem) (Geobacter bemidjiensis).